The chain runs to 152 residues: Aspartate carbamoyltransferase regulatory chain (152 aa).

Cysteine 109, cysteine 114, cysteine 138, and cysteine 141 together coordinate Zn(2+).

This sequence belongs to the PyrI family. In terms of assembly, contains catalytic and regulatory chains. Zn(2+) serves as cofactor.

Functionally, involved in allosteric regulation of aspartate carbamoyltransferase. This is Aspartate carbamoyltransferase regulatory chain from Proteus mirabilis (strain HI4320).